Reading from the N-terminus, the 393-residue chain is Phosphopentomutase (393 aa).

Positions 15, 288, 293, 329, 330, and 341 each coordinate Mn(2+).

Belongs to the phosphopentomutase family. It depends on Mn(2+) as a cofactor.

The protein localises to the cytoplasm. It carries out the reaction 2-deoxy-alpha-D-ribose 1-phosphate = 2-deoxy-D-ribose 5-phosphate. The catalysed reaction is alpha-D-ribose 1-phosphate = D-ribose 5-phosphate. It participates in carbohydrate degradation; 2-deoxy-D-ribose 1-phosphate degradation; D-glyceraldehyde 3-phosphate and acetaldehyde from 2-deoxy-alpha-D-ribose 1-phosphate: step 1/2. In terms of biological role, isomerase that catalyzes the conversion of deoxy-ribose 1-phosphate (dRib-1-P) and ribose 1-phosphate (Rib-1-P) to deoxy-ribose 5-phosphate (dRib-5-P) and ribose 5-phosphate (Rib-5-P), respectively. The chain is Phosphopentomutase from Halalkalibacterium halodurans (strain ATCC BAA-125 / DSM 18197 / FERM 7344 / JCM 9153 / C-125) (Bacillus halodurans).